The chain runs to 388 residues: Probable peptidoglycan glycosyltransferase FtsW (388 aa).

Over 1–19 the chain is Cytoplasmic; the sequence is MMSPSTSAPHNQPIQPELD. A helical transmembrane segment spans residues 20-40; that stretch reads VLLVSTVLLLLGLGLVMVYSA. Residues 41–55 lie on the Periplasmic side of the membrane; sequence SIAIAEAKFGEGSSY. A helical membrane pass occupies residues 56-76; it reads YFLARQASYILAGIAVGIGCF. Residues 77–89 lie on the Cytoplasmic side of the membrane; the sequence is RIPLRWWQAYSHY. A helical transmembrane segment spans residues 90 to 110; the sequence is LLGLGILLLLVVLIPGISHEI. The Periplasmic portion of the chain corresponds to 111-116; sequence NGSRRW. Residues 117 to 137 form a helical membrane-spanning segment; sequence IPLGITSFQPSELMKLIILIF. The Cytoplasmic portion of the chain corresponds to 138 to 151; the sequence is TADYVVRKAAFKDH. A helical membrane pass occupies residues 152–172; it reads FFKGFLPILALLTIVSLLLLM. At 173–175 the chain is on the periplasmic side; the sequence is EPD. Transmembrane regions (helical) follow at residues 176 to 196 and 197 to 217; these read LGATVVIAAIVLSIMFMNGMS and LKMFFGLICLVPVLLALLIII. The Periplasmic portion of the chain corresponds to 218–284; it reads EPYRMDRINA…DFMFAVLAEE (67 aa). The helical transmembrane segment at 285–305 threads the bilayer; that stretch reads LGFAGVVTVISLFFFLLVRIF. Residues 306-324 lie on the Cytoplasmic side of the membrane; that stretch reads KVGRTAARLGDQFGSLVAQ. Residues 325–345 form a helical membrane-spanning segment; that stretch reads GIGVWLGLQAFINMGVNMGLL. Residues 346 to 351 are Periplasmic-facing; that stretch reads PTKGLT. Residues 352–372 traverse the membrane as a helical segment; it reads LPFMSYGGSSIVINSIAIAIL. At 373–388 the chain is on the cytoplasmic side; that stretch reads LRIDWENRLKRRGLNA.

This sequence belongs to the SEDS family. FtsW subfamily.

Its subcellular location is the cell inner membrane. The enzyme catalyses [GlcNAc-(1-&gt;4)-Mur2Ac(oyl-L-Ala-gamma-D-Glu-L-Lys-D-Ala-D-Ala)](n)-di-trans,octa-cis-undecaprenyl diphosphate + beta-D-GlcNAc-(1-&gt;4)-Mur2Ac(oyl-L-Ala-gamma-D-Glu-L-Lys-D-Ala-D-Ala)-di-trans,octa-cis-undecaprenyl diphosphate = [GlcNAc-(1-&gt;4)-Mur2Ac(oyl-L-Ala-gamma-D-Glu-L-Lys-D-Ala-D-Ala)](n+1)-di-trans,octa-cis-undecaprenyl diphosphate + di-trans,octa-cis-undecaprenyl diphosphate + H(+). It functions in the pathway cell wall biogenesis; peptidoglycan biosynthesis. In terms of biological role, peptidoglycan polymerase that is essential for cell division. In Nitrosomonas europaea (strain ATCC 19718 / CIP 103999 / KCTC 2705 / NBRC 14298), this protein is Probable peptidoglycan glycosyltransferase FtsW.